The sequence spans 431 residues: UDP-N-acetylglucosamine 1-carboxyvinyltransferase (431 aa).

Phosphoenolpyruvate is bound at residue 22 to 23; sequence KN. UDP-N-acetyl-alpha-D-glucosamine is bound at residue arginine 102. Catalysis depends on cysteine 126, which acts as the Proton donor. 2-(S-cysteinyl)pyruvic acid O-phosphothioketal is present on cysteine 126. Residues aspartate 318 and isoleucine 340 each coordinate UDP-N-acetyl-alpha-D-glucosamine.

The protein belongs to the EPSP synthase family. MurA subfamily.

The protein resides in the cytoplasm. It carries out the reaction phosphoenolpyruvate + UDP-N-acetyl-alpha-D-glucosamine = UDP-N-acetyl-3-O-(1-carboxyvinyl)-alpha-D-glucosamine + phosphate. Its pathway is cell wall biogenesis; peptidoglycan biosynthesis. In terms of biological role, cell wall formation. Adds enolpyruvyl to UDP-N-acetylglucosamine. The protein is UDP-N-acetylglucosamine 1-carboxyvinyltransferase of Bartonella tribocorum (strain CIP 105476 / IBS 506).